Here is a 221-residue protein sequence, read N- to C-terminus: Small histidine-alanine-rich protein (221 aa).

The N-terminal stretch at 1 to 21 (MVSFSKNKILSAAVFASVLLL) is a signal peptide. Residues 52-67 (AHAGDAHHAHHVADAH) show a composition bias toward basic and acidic residues. Disordered stretches follow at residues 52-141 (AHAG…AANA) and 180-221 (AHHD…HLHH). Repeat copies occupy residues 57–59 (AHH) and 60–62 (AHH). The tract at residues 57-68 (AHHAHHVADAHH) is 4 X 3 AA approximate tandem repeats of A-H-H. One copy of the 1-3; approximate repeat lies at 63-65 (VAD). A run of 13 repeats spans residues 66–68 (AHH), 69–74 (AHHAAN), 75–80 (AHHAAN), 81–86 (AHHAAN), 87–92 (AHHAAN), 93–98 (AHHAAN), 99–104 (AHHAAN), 105–110 (AHHAAN), 111–116 (AHHAAN), 117–122 (AHHAAN), 123–128 (AHHAAN), 129–134 (AHHAAN), and 135–140 (AHHAAN). The segment at 69-146 (AHHAANAHHA…HAANAHHAAD (78 aa)) is 13 X 6 AA approximate tandem repeats of A-H-H-A-A-N. A compositionally biased stretch (low complexity) spans 75-141 (AHHAANAHHA…AANAHHAANA (67 aa)). A 2-13; approximate repeat occupies 141–146 (AHHAAD). 7 consecutive repeat copies span residues 176–180 (HHDDA), 181–185 (HHDGA), 186–190 (HHDDA), 191–195 (HHDGA), 196–200 (HHDGA), 201–205 (HHDGA), and 206–210 (HHDGA). The tract at residues 176-210 (HHDDAHHDGAHHDDAHHDGAHHDGAHHDGAHHDGA) is 7 X 5 AA tandem repeats of H-H-D-[DG]-A. Over residues 180-211 (AHHDGAHHDDAHHDGAHHDGAHHDGAHHDGAH) the composition is skewed to basic and acidic residues.

This is Small histidine-alanine-rich protein from Plasmodium falciparum (isolate FC27 / Papua New Guinea).